Consider the following 380-residue polypeptide: Tryptophan 2,3-dioxygenase (380 aa).

Residues 57–61 (FIITH) and arginine 128 contribute to the substrate site. A heme-binding site is contributed by histidine 313. Position 328 (threonine 328) interacts with substrate.

Belongs to the tryptophan 2,3-dioxygenase family. As to quaternary structure, homotetramer. Dimer of dimers. It depends on heme as a cofactor.

It catalyses the reaction L-tryptophan + O2 = N-formyl-L-kynurenine. It participates in amino-acid degradation; L-tryptophan degradation via kynurenine pathway; L-kynurenine from L-tryptophan: step 1/2. Its pathway is pigment biosynthesis; ommochrome biosynthesis. Its function is as follows. Heme-dependent dioxygenase that catalyzes the oxidative cleavage of the L-tryptophan (L-Trp) pyrrole ring and converts L-tryptophan to N-formyl-L-kynurenine. Catalyzes the oxidative cleavage of the indole moiety. The chain is Tryptophan 2,3-dioxygenase from Drosophila virilis (Fruit fly).